The following is a 146-amino-acid chain: Decarboxylase dmxR15 (146 aa).

One can recognise an EthD domain in the interval 31-126; that stretch reads PGMSEGDYRN…MHDHEVFADT (96 aa).

Belongs to the tpcK family.

It catalyses the reaction atrochrysone carboxylate + H(+) = atrochrysone + CO2. It participates in secondary metabolite biosynthesis. Its function is as follows. Decarboxylase; part of the gene cluster that mediates the biosynthesis of the dimeric xanthones cryptosporioptides. The pathway begins with the synthesis of atrochrysone thioester by the polyketide synthase dmx-nrPKS. The atrochrysone carboxyl ACP thioesterase dmxR1 then breaks the thioester bond and releases the atrochrysone carboxylic acid from dmx-nrPKS. Atrochrysone carboxylic acid is decarboxylated by the decarboxylase dmxR15, and oxidized by the anthrone oxygenase dmxR16 to yield emodin. Emodin is then reduced to emodin hydroquinone by the oxidoreductase dmxR7. A-ring reduction by the short chain dehydrogenase dmxR18, dehydration by the scytalone dehydratase-like protein dmxR17 and probable spontaneous re-oxidation, results in overall deoxygenation to chrysophanol. Baeyer-Villiger oxidation by the Baeyer-Villiger monooxygenase (BVMO) dmxR6 then yields monodictylactone in equilibrium with monodictyphenone. In the case of the cryptosporioptides biosynthesis, monodictylactone is reduced at C-12 to an alcohol (by the short chain dehydrogenases dmxR12 or dmxR8) and hydroxylated at C-5 by dmxR9, yielding the electron-rich aromatic which could eliminate H(2)O to form the ortho-quinonemethide, followed by tautomerisation to paraquinone and complete the formal reduction to produce the 10-methylgroup. Conjugate addition of C-4a-OH to the resulting paraquinone by the monooxygenase dmxR10 then gives cyclohexadienone, which is then reduced at C-5 by the short chain dehydrogenase dmxR3 to give the dihydroxanthone. The 6,7-epoxide in the cryptosporioptides could be introduced by the cytochrome P450 monooxygenase dmxL3. The highly reducing PKS dmxL2 manufactures butyrate, which is further carboxylated by dmxL1 to form ethylmalonate. It is not yet clear whether the carboxylation occurs while the butyrate is attached to the ACP of dmxL2, but this unusual fungal metabolite could then be esterified to O-5 by the O-acetyltransferase dmxR13. Finally, dimerization performed by dmxR5 gives the observed dimers cryptosporioptides A, B and C as the final products of the pathway. The polypeptide is Decarboxylase dmxR15 (Cryptosporiopsis sp. (strain 8999)).